Reading from the N-terminus, the 86-residue chain is Myosin light chain alkali (86 aa).

Residues 11 to 46 (GCYEDFIECLKLYDKEENGTMMLAELQHALLALGES) enclose the EF-hand domain.

In terms of assembly, myosin is a hexamer of 2 heavy chains and 4 light chains.

The chain is Myosin light chain alkali (Mlc1) from Drosophila subobscura (Fruit fly).